Here is a 330-residue protein sequence, read N- to C-terminus: DNA-directed RNA polymerase subunit alpha (330 aa).

Residues 1–232 (MAILAFQKPD…YHFMLFSDEK (232 aa)) are alpha N-terminal domain (alpha-NTD). The segment at 248–330 (EEVLHMRQLL…DISKYKLDKE (83 aa)) is alpha C-terminal domain (alpha-CTD).

It belongs to the RNA polymerase alpha chain family. In terms of assembly, homodimer. The RNAP catalytic core consists of 2 alpha, 1 beta, 1 beta' and 1 omega subunit. When a sigma factor is associated with the core the holoenzyme is formed, which can initiate transcription.

The enzyme catalyses RNA(n) + a ribonucleoside 5'-triphosphate = RNA(n+1) + diphosphate. Functionally, DNA-dependent RNA polymerase catalyzes the transcription of DNA into RNA using the four ribonucleoside triphosphates as substrates. This chain is DNA-directed RNA polymerase subunit alpha, found in Bacteroides fragilis (strain ATCC 25285 / DSM 2151 / CCUG 4856 / JCM 11019 / LMG 10263 / NCTC 9343 / Onslow / VPI 2553 / EN-2).